A 212-amino-acid polypeptide reads, in one-letter code: Large ribosomal subunit protein mL48 (212 aa).

The N-terminal 28 residues, 1–28 (MNGALGKVLCLKNDTIFKQAFSLLRFRT), are a transit peptide targeting the mitochondrion. Position 199 is an N6-succinyllysine (Lys-199).

Belongs to the mitochondrion-specific ribosomal protein mL48 family. In terms of assembly, component of the mitochondrial ribosome large subunit (39S) which comprises a 16S rRNA and about 50 distinct proteins. Interacts with OXA1L.

The protein resides in the mitochondrion. In Bos taurus (Bovine), this protein is Large ribosomal subunit protein mL48 (MRPL48).